The primary structure comprises 87 residues: Small ribosomal subunit protein uS17 (87 aa).

This sequence belongs to the universal ribosomal protein uS17 family. Part of the 30S ribosomal subunit.

One of the primary rRNA binding proteins, it binds specifically to the 5'-end of 16S ribosomal RNA. The sequence is that of Small ribosomal subunit protein uS17 from Geobacillus thermodenitrificans (strain NG80-2).